We begin with the raw amino-acid sequence, 303 residues long: sn-1-specific diacylglycerol lipase ABHD11 (303 aa).

Residues 1–22 (MLRWTRAWTAPYRGIGLSNSSF) constitute a mitochondrion transit peptide. The region spanning 55–290 (PALVFLHGLF…NAGHWVHSDR (236 aa)) is the AB hydrolase-1 domain. Position 75 is an N6-succinyllysine (K75). Active-site charge relay system residues include S129, D225, and H284.

This sequence belongs to the AB hydrolase superfamily. Interacts with OGDH and DLST; this interaction maintains the functional lipoylation of the 2-oxoglutarate dehydrogenase complex. Phosphorylated.

Its subcellular location is the mitochondrion. The protein resides in the mitochondrion matrix. The enzyme catalyses a 1,3-diacyl-sn-glycerol + H2O = a 1-acyl-sn-glycerol + a fatty acid + H(+). The catalysed reaction is 1-octadecanoyl-2-(9Z-octadecenoyl)-sn-glycerol + H2O = 2-(9Z-octadecenoyl)-glycerol + octadecanoate + H(+). It catalyses the reaction 1-octadecanoyl-2-(4Z,7Z,10Z,13Z,16Z,19Z-docosahexaenoyl)-sn-glycerol + H2O = 2-(4Z,7Z,10Z,13Z,16Z,19Z-docosahexaenoyl)-glycerol + octadecanoate + H(+). It carries out the reaction a 1,2-diacyl-sn-glycerol + H2O = a 2-acylglycerol + a fatty acid + H(+). The enzyme catalyses 1,2-didecanoylglycerol + H2O = decanoylglycerol + decanoate + H(+). The catalysed reaction is 1-octadecanoyl-2-(5Z,8Z,11Z,14Z-eicosatetraenoyl)-sn-glycerol + H2O = 2-(5Z,8Z,11Z,14Z-eicosatetraenoyl)-glycerol + octadecanoate + H(+). The diacylglycerol lipase activity can be modulated by phosphorylation by cAMP-dependent protein kinase. Functionally, catalyzes the hydrolysis of diacylglycerol in vitro and may function as a key regulator in lipid metabolism, namely by regulating the intracellular levels of diacylglycerol. 1,2-diacyl-sn-glycerols are the preferred substrate over 1,3-diacyl-sn-glycerols. The enzyme hydrolyzes stearate in preference to palmitate from the sn-1 position of 1,2-diacyl-sn-glycerols. Maintains the functional lipoylation of the 2-oxoglutarate dehydrogenase complex (OGDHc) through its interaction with the OGDHc by preventing the formation of lipoyl adducts. In addition, is also required for the expansion and differentiation of embryonic stem cells (ESCs). In Bos taurus (Bovine), this protein is sn-1-specific diacylglycerol lipase ABHD11.